The chain runs to 206 residues: Acireductone dioxygenase (206 aa).

Positions 102, 104, 108, and 146 each coordinate Fe(2+). Histidine 102, histidine 104, glutamate 108, and histidine 146 together coordinate Ni(2+).

The protein belongs to the acireductone dioxygenase (ARD) family. In terms of assembly, monomer. Fe(2+) is required as a cofactor. The cofactor is Ni(2+).

It carries out the reaction 1,2-dihydroxy-5-(methylsulfanyl)pent-1-en-3-one + O2 = 3-(methylsulfanyl)propanoate + CO + formate + 2 H(+). The enzyme catalyses 1,2-dihydroxy-5-(methylsulfanyl)pent-1-en-3-one + O2 = 4-methylsulfanyl-2-oxobutanoate + formate + 2 H(+). Its pathway is amino-acid biosynthesis; L-methionine biosynthesis via salvage pathway; L-methionine from S-methyl-5-thio-alpha-D-ribose 1-phosphate: step 5/6. Catalyzes 2 different reactions between oxygen and the acireductone 1,2-dihydroxy-3-keto-5-methylthiopentene (DHK-MTPene) depending upon the metal bound in the active site. Fe-containing acireductone dioxygenase (Fe-ARD) produces formate and 2-keto-4-methylthiobutyrate (KMTB), the alpha-ketoacid precursor of methionine in the methionine recycle pathway. Ni-containing acireductone dioxygenase (Ni-ARD) produces methylthiopropionate, carbon monoxide and formate, and does not lie on the methionine recycle pathway. The protein is Acireductone dioxygenase of Frankia alni (strain DSM 45986 / CECT 9034 / ACN14a).